A 210-amino-acid polypeptide reads, in one-letter code: MARKKVLVLHSGGMDSTTCLLQAKAEGHDVASLGIDYGQRLLVEMMFAEGQCEKYSIPRHVINVNWQKAERQIPLNRSVEEMAHSVSPAFLPGRNIVFLGLGHAHAAGIGADELQIGLNCVDFSGYPDCTTQFYDSYCTMLNIGNPGGPKLVAPLLKMSKPEIARLASTLGLQRNDTWSCYRPQIREGSIVACGECDACKLHEFAWQELK.

10–20 (HSGGMDSTTCL) contacts ATP. Positions 180, 193, 196, and 199 each coordinate Zn(2+).

It belongs to the QueC family. Zn(2+) is required as a cofactor.

The catalysed reaction is 7-carboxy-7-deazaguanine + NH4(+) + ATP = 7-cyano-7-deazaguanine + ADP + phosphate + H2O + H(+). It participates in purine metabolism; 7-cyano-7-deazaguanine biosynthesis. Its function is as follows. Catalyzes the ATP-dependent conversion of 7-carboxy-7-deazaguanine (CDG) to 7-cyano-7-deazaguanine (preQ(0)). The protein is 7-cyano-7-deazaguanine synthase 2 of Rhodopseudomonas palustris (strain HaA2).